The primary structure comprises 446 residues: Histidine--tRNA ligase (446 aa).

It belongs to the class-II aminoacyl-tRNA synthetase family. In terms of assembly, homodimer.

Its subcellular location is the cytoplasm. The catalysed reaction is tRNA(His) + L-histidine + ATP = L-histidyl-tRNA(His) + AMP + diphosphate + H(+). In Burkholderia pseudomallei (strain 1710b), this protein is Histidine--tRNA ligase.